Consider the following 356-residue polypeptide: MMRPPEHQLLSSLDQRSRDIFRLIVETYLNDGDPVGSRNLSRLLPHTLSPATIRNVMSDLEHLGLIYAPHISAGRLPTQIGLRFFVDAFLEVGDLPPEERSSIEAQVRAAGTSNSVESVLTEASQVLSGLSRGAGLVLTNKTDVALKHIEFVRLEPMRALAVLVMQNGDVENRVIDLPAGISTSQLIEASNFLNAHIHGHTLSEAKSELRKLSEETRRELDQLSQELVAKGLAVWSGAGADQPARLIVRGRANLLENVHAQEDIERLRHLFDDLETKDGMVQLLDLAEAGSGVRIFIGSENKLFSLSGSSLVVAPYRDSEQRVIGALGVIGPTRLNYARIVPMVDYTAQIVSRLLR.

The protein belongs to the HrcA family.

In terms of biological role, negative regulator of class I heat shock genes (grpE-dnaK-dnaJ and groELS operons). Prevents heat-shock induction of these operons. This Brucella abortus (strain S19) protein is Heat-inducible transcription repressor HrcA.